Reading from the N-terminus, the 430-residue chain is 3-phosphoshikimate 1-carboxyvinyltransferase (430 aa).

3-phosphoshikimate is bound by residues K20, S21, and R25. A phosphoenolpyruvate-binding site is contributed by K20. 2 residues coordinate phosphoenolpyruvate: G90 and R118. 3-phosphoshikimate contacts are provided by S163, S164, Q165, S191, D311, and K338. Q165 is a binding site for phosphoenolpyruvate. The active-site Proton acceptor is D311. Phosphoenolpyruvate contacts are provided by R342 and R383.

It belongs to the EPSP synthase family. In terms of assembly, monomer.

The protein resides in the cytoplasm. The enzyme catalyses 3-phosphoshikimate + phosphoenolpyruvate = 5-O-(1-carboxyvinyl)-3-phosphoshikimate + phosphate. It functions in the pathway metabolic intermediate biosynthesis; chorismate biosynthesis. Functionally, catalyzes the transfer of the enolpyruvyl moiety of phosphoenolpyruvate (PEP) to the 5-hydroxyl of shikimate-3-phosphate (S3P) to produce enolpyruvyl shikimate-3-phosphate and inorganic phosphate. The polypeptide is 3-phosphoshikimate 1-carboxyvinyltransferase (Methanosarcina mazei (strain ATCC BAA-159 / DSM 3647 / Goe1 / Go1 / JCM 11833 / OCM 88) (Methanosarcina frisia)).